Consider the following 186-residue polypeptide: Acireductone dioxygenase (186 aa).

Residues His89, His91, Glu95, and His134 each contribute to the Fe(2+) site. 4 residues coordinate Ni(2+): His89, His91, Glu95, and His134.

Belongs to the acireductone dioxygenase (ARD) family. Fe(2+) serves as cofactor. Ni(2+) is required as a cofactor.

The protein localises to the cytoplasm. The protein resides in the nucleus. It catalyses the reaction 1,2-dihydroxy-5-(methylsulfanyl)pent-1-en-3-one + O2 = 4-methylsulfanyl-2-oxobutanoate + formate + 2 H(+). The catalysed reaction is 1,2-dihydroxy-5-(methylsulfanyl)pent-1-en-3-one + O2 = 3-(methylsulfanyl)propanoate + CO + formate + 2 H(+). It participates in amino-acid biosynthesis; L-methionine biosynthesis via salvage pathway; L-methionine from S-methyl-5-thio-alpha-D-ribose 1-phosphate: step 5/6. Catalyzes 2 different reactions between oxygen and the acireductone 1,2-dihydroxy-3-keto-5-methylthiopentene (DHK-MTPene) depending upon the metal bound in the active site. Fe-containing acireductone dioxygenase (Fe-ARD) produces formate and 2-keto-4-methylthiobutyrate (KMTB), the alpha-ketoacid precursor of methionine in the methionine recycle pathway. Ni-containing acireductone dioxygenase (Ni-ARD) produces methylthiopropionate, carbon monoxide and formate, and does not lie on the methionine recycle pathway. The sequence is that of Acireductone dioxygenase from Drosophila melanogaster (Fruit fly).